Consider the following 216-residue polypeptide: FGFR1 oncogene partner 2 homolog (216 aa).

Coiled-coil stretches lie at residues 33-102 (TTTL…LIMS) and 131-185 (SKEL…ITRA). The interval 193–216 (EDAAESSSHSASSVPNTDLSLRKS) is disordered. A compositionally biased stretch (polar residues) spans 206 to 216 (VPNTDLSLRKS).

This sequence belongs to the SIKE family.

It is found in the cytoplasm. The sequence is that of FGFR1 oncogene partner 2 homolog (fgfr1op2) from Xenopus tropicalis (Western clawed frog).